Consider the following 193-residue polypeptide: Acyl carrier protein phosphodiesterase (193 aa).

Belongs to the AcpH family.

It catalyses the reaction holo-[ACP] + H2O = apo-[ACP] + (R)-4'-phosphopantetheine + H(+). In terms of biological role, converts holo-ACP to apo-ACP by hydrolytic cleavage of the phosphopantetheine prosthetic group from ACP. The chain is Acyl carrier protein phosphodiesterase from Salmonella paratyphi A (strain ATCC 9150 / SARB42).